A 152-amino-acid chain; its full sequence is UPF0178 protein YPTS_2857 (152 aa).

The protein belongs to the UPF0178 family.

The polypeptide is UPF0178 protein YPTS_2857 (Yersinia pseudotuberculosis serotype IB (strain PB1/+)).